The chain runs to 122 residues: Holo-[acyl-carrier-protein] synthase (122 aa).

2 residues coordinate Mg(2+): Asp8 and Glu56.

The protein belongs to the P-Pant transferase superfamily. AcpS family. The cofactor is Mg(2+).

It localises to the cytoplasm. It catalyses the reaction apo-[ACP] + CoA = holo-[ACP] + adenosine 3',5'-bisphosphate + H(+). Functionally, transfers the 4'-phosphopantetheine moiety from coenzyme A to a Ser of acyl-carrier-protein. This Alkaliphilus metalliredigens (strain QYMF) protein is Holo-[acyl-carrier-protein] synthase.